An 89-amino-acid polypeptide reads, in one-letter code: Small ribosomal subunit protein uS19 (89 aa).

The protein belongs to the universal ribosomal protein uS19 family.

Its function is as follows. Protein S19 forms a complex with S13 that binds strongly to the 16S ribosomal RNA. The sequence is that of Small ribosomal subunit protein uS19 from Phocaeicola vulgatus (strain ATCC 8482 / DSM 1447 / JCM 5826 / CCUG 4940 / NBRC 14291 / NCTC 11154) (Bacteroides vulgatus).